The sequence spans 308 residues: UDP-N-acetylenolpyruvoylglucosamine reductase (308 aa).

One can recognise an FAD-binding PCMH-type domain in the interval 32–196 (VGGPAARLYK…ISAKLQLSPG (165 aa)). R176 is a catalytic residue. S225 functions as the Proton donor in the catalytic mechanism. Residue E296 is part of the active site.

This sequence belongs to the MurB family. Requires FAD as cofactor.

The protein localises to the cytoplasm. It carries out the reaction UDP-N-acetyl-alpha-D-muramate + NADP(+) = UDP-N-acetyl-3-O-(1-carboxyvinyl)-alpha-D-glucosamine + NADPH + H(+). The protein operates within cell wall biogenesis; peptidoglycan biosynthesis. Functionally, cell wall formation. In Legionella pneumophila (strain Corby), this protein is UDP-N-acetylenolpyruvoylglucosamine reductase.